The chain runs to 160 residues: Phosphopantetheine adenylyltransferase (160 aa).

S9 is a substrate binding site. Residues 9-10 (SF) and H17 each bind ATP. Residues K41, T73, and R87 each contribute to the substrate site. Residues 88–90 (GMR), E98, and 123–129 (YTFFSSS) contribute to the ATP site.

The protein belongs to the bacterial CoaD family. As to quaternary structure, homohexamer. Mg(2+) serves as cofactor.

Its subcellular location is the cytoplasm. It catalyses the reaction (R)-4'-phosphopantetheine + ATP + H(+) = 3'-dephospho-CoA + diphosphate. It functions in the pathway cofactor biosynthesis; coenzyme A biosynthesis; CoA from (R)-pantothenate: step 4/5. Its function is as follows. Reversibly transfers an adenylyl group from ATP to 4'-phosphopantetheine, yielding dephospho-CoA (dPCoA) and pyrophosphate. In Roseiflexus sp. (strain RS-1), this protein is Phosphopantetheine adenylyltransferase.